The chain runs to 426 residues: Zinc finger protein 662 (426 aa).

The region spanning 1–44 (MLENYGAVASLAAFPFPKPALISQLERGETPWCSVPRGALDGEA) is the KRAB domain. 8 consecutive C2H2-type zinc fingers follow at residues 192–214 (YICE…QKTH), 220–242 (YGCK…QRIH), 248–270 (YECQ…QRIH), 276–298 (FECK…QRIH), 304–326 (YTCK…QRMH), 332–354 (YECK…QRVH), 360–382 (HECT…QRIH), and 388–410 (YKCN…QRRH).

It belongs to the krueppel C2H2-type zinc-finger protein family.

It localises to the nucleus. May be involved in transcriptional regulation. In Homo sapiens (Human), this protein is Zinc finger protein 662 (ZNF662).